The primary structure comprises 478 residues: Solute carrier family 49 member 4 (478 aa).

Positions 1–27 are disordered; that stretch reads MGSGWSSEEEERQPLLGPGLGPAPGAA. The Cytoplasmic segment spans residues 1 to 51; sequence MGSGWSSEEEERQPLLGPGLGPAPGAARRGREATAVLPAAGPNPGRVYGRR. Residues 15 to 16 carry the Di-leucine motif; mediates lysosomal localization motif; sequence LL. A helical transmembrane segment spans residues 52-72; the sequence is WLVLLLFSLLAFAQGLVWNTW. Over 73-89 the chain is Lumenal; the sequence is GPIQNSARQAYGFSGWD. Residues 90–110 traverse the membrane as a helical segment; the sequence is IALLVLWGPIGFLPCFAFMWL. Residues 111-117 lie on the Cytoplasmic side of the membrane; that stretch reads LDKRGLR. Residues 118–138 form a helical membrane-spanning segment; it reads VTVLLTSFLMVLGTGLRCIPV. Over 139-152 the chain is Lumenal; sequence SDLALKKRLIHGGQ. The helical transmembrane segment at 153-173 threads the bilayer; sequence ILNGLAGPTVMNAAPFLSTTW. The Cytoplasmic segment spans residues 174–184; it reads FSADERATATA. Residues 185 to 205 traverse the membrane as a helical segment; the sequence is IASMLSYLGGACAFLVGPLVV. Residues 206-229 lie on the Lumenal side of the membrane; that stretch reads PAPNGTAPLLAAESSRAHIKDRIE. A glycan (N-linked (GlcNAc...) asparagine) is linked at Asn-209. A helical membrane pass occupies residues 230 to 250; the sequence is TVLYAEFGVVCLIFSATLAYF. At 251 to 281 the chain is on the cytoplasmic side; that stretch reads PPRPPLPPSVAAASQRLSYRRSFCRLLSNLR. Residues 282–302 traverse the membrane as a helical segment; that stretch reads FLMIALAYAIPLGVFAGWSGV. The Lumenal portion of the chain corresponds to 303 to 314; it reads LDLILTPVHVSQ. Residues 315 to 335 form a helical membrane-spanning segment; it reads VDAGWIGFWSIVGGCVVGIAM. Residues 336 to 347 lie on the Cytoplasmic side of the membrane; sequence ARFADFIRGMLK. A helical membrane pass occupies residues 348–368; the sequence is LILLLLFSGATLSSTWFTLTC. The Lumenal segment spans residues 369 to 384; the sequence is LNSITHLPLTTVTLYA. The chain crosses the membrane as a helical span at residues 385–405; sequence SCILLGVFLNSSVPIFFELFV. Topologically, residues 406 to 414 are cytoplasmic; it reads ETVYPVPEG. The chain crosses the membrane as a helical span at residues 415 to 435; that stretch reads ITCGVVTFLSNMFMGVLLFFV. The Lumenal portion of the chain corresponds to 436-442; the sequence is TFYHTEL. Residues 443–463 form a helical membrane-spanning segment; it reads SWFNWCLPGSCLLSLLLILCF. The Cytoplasmic portion of the chain corresponds to 464–478; that stretch reads RESYDRLYLDVVVSV.

The protein belongs to the major facilitator superfamily. In terms of processing, cleaved in lysosomes by cathepsin L between Leu-214 and Ala-261, generating a N-glycosylated N-terminal and a non-glycosylated C-terminal fragment.

Its subcellular location is the lysosome membrane. It carries out the reaction pyridoxine(out) + n H(+)(out) = pyridoxine(in) + n H(+)(in). Its function is as follows. Mediates H(+)-dependent pyridoxine transport. The polypeptide is Solute carrier family 49 member 4 (Slc49a4) (Mus musculus (Mouse)).